A 96-amino-acid chain; its full sequence is Exodeoxyribonuclease 7 small subunit (96 aa).

Residues 73-96 (RAPEQSAANDVSAPGSAEEHDHGR) form a disordered region.

The protein belongs to the XseB family. As to quaternary structure, heterooligomer composed of large and small subunits.

It localises to the cytoplasm. The enzyme catalyses Exonucleolytic cleavage in either 5'- to 3'- or 3'- to 5'-direction to yield nucleoside 5'-phosphates.. Functionally, bidirectionally degrades single-stranded DNA into large acid-insoluble oligonucleotides, which are then degraded further into small acid-soluble oligonucleotides. The chain is Exodeoxyribonuclease 7 small subunit from Acidothermus cellulolyticus (strain ATCC 43068 / DSM 8971 / 11B).